Reading from the N-terminus, the 395-residue chain is Elongation factor Tu (395 aa).

The tr-type G domain occupies 10–204 (KPHVNVGTIG…AVDEYIPEPT (195 aa)). A G1 region spans residues 19–26 (GHVDHGKT). GTP is bound at residue 19-26 (GHVDHGKT). Residue Thr-26 participates in Mg(2+) binding. A G2 region spans residues 60 to 64 (GITIA). The G3 stretch occupies residues 81–84 (DCPG). Residues 81 to 85 (DCPGH) and 136 to 139 (NKVD) each bind GTP. Positions 136-139 (NKVD) are G4. A G5 region spans residues 174–176 (SAL).

The protein belongs to the TRAFAC class translation factor GTPase superfamily. Classic translation factor GTPase family. EF-Tu/EF-1A subfamily. In terms of assembly, monomer.

Its subcellular location is the cytoplasm. The catalysed reaction is GTP + H2O = GDP + phosphate + H(+). Its function is as follows. GTP hydrolase that promotes the GTP-dependent binding of aminoacyl-tRNA to the A-site of ribosomes during protein biosynthesis. The chain is Elongation factor Tu from Exiguobacterium sibiricum (strain DSM 17290 / CCUG 55495 / CIP 109462 / JCM 13490 / 255-15).